The following is a 335-amino-acid chain: Holliday junction branch migration complex subunit RuvB (335 aa).

The large ATPase domain (RuvB-L) stretch occupies residues 4–184 (ADRIISTSAK…FGIVQRLEFY (181 aa)). ATP-binding positions include Ile23, Arg24, Gly65, Lys68, Thr69, Thr70, 131 to 133 (EDY), Arg174, Tyr184, and Arg221. Thr69 contributes to the Mg(2+) binding site. The small ATPAse domain (RuvB-S) stretch occupies residues 185–255 (AVEDLTSIVA…SAKAALLMLD (71 aa)). A head domain (RuvB-H) region spans residues 258–335 (DAGFDYLDRK…RYFGLEKLTE (78 aa)). Residues Arg294, Arg313, and Arg318 each coordinate DNA.

Belongs to the RuvB family. Homohexamer. Forms an RuvA(8)-RuvB(12)-Holliday junction (HJ) complex. HJ DNA is sandwiched between 2 RuvA tetramers; dsDNA enters through RuvA and exits via RuvB. An RuvB hexamer assembles on each DNA strand where it exits the tetramer. Each RuvB hexamer is contacted by two RuvA subunits (via domain III) on 2 adjacent RuvB subunits; this complex drives branch migration. In the full resolvosome a probable DNA-RuvA(4)-RuvB(12)-RuvC(2) complex forms which resolves the HJ.

The protein localises to the cytoplasm. The catalysed reaction is ATP + H2O = ADP + phosphate + H(+). Its function is as follows. The RuvA-RuvB-RuvC complex processes Holliday junction (HJ) DNA during genetic recombination and DNA repair, while the RuvA-RuvB complex plays an important role in the rescue of blocked DNA replication forks via replication fork reversal (RFR). RuvA specifically binds to HJ cruciform DNA, conferring on it an open structure. The RuvB hexamer acts as an ATP-dependent pump, pulling dsDNA into and through the RuvAB complex. RuvB forms 2 homohexamers on either side of HJ DNA bound by 1 or 2 RuvA tetramers; 4 subunits per hexamer contact DNA at a time. Coordinated motions by a converter formed by DNA-disengaged RuvB subunits stimulates ATP hydrolysis and nucleotide exchange. Immobilization of the converter enables RuvB to convert the ATP-contained energy into a lever motion, pulling 2 nucleotides of DNA out of the RuvA tetramer per ATP hydrolyzed, thus driving DNA branch migration. The RuvB motors rotate together with the DNA substrate, which together with the progressing nucleotide cycle form the mechanistic basis for DNA recombination by continuous HJ branch migration. Branch migration allows RuvC to scan DNA until it finds its consensus sequence, where it cleaves and resolves cruciform DNA. The protein is Holliday junction branch migration complex subunit RuvB of Pasteurella multocida (strain Pm70).